The sequence spans 341 residues: Large ribosomal subunit protein uL29m (341 aa).

Residues Leu44–Asp74 are disordered. Positions Arg48–Val62 are enriched in basic residues.

Belongs to the universal ribosomal protein uL29 family. Component of the mitochondrial large ribosomal subunit. Mature mitochondrial ribosomes consist of a small (37S) and a large (54S) subunit. The 37S subunit contains at least 33 different proteins and 1 molecule of RNA (15S). The 54S subunit contains at least 45 different proteins and 1 molecule of RNA (21S).

It localises to the mitochondrion. The sequence is that of Large ribosomal subunit protein uL29m (MRPL4) from Eremothecium gossypii (strain ATCC 10895 / CBS 109.51 / FGSC 9923 / NRRL Y-1056) (Yeast).